Consider the following 159-residue polypeptide: Ribosomal RNA large subunit methyltransferase H (159 aa).

S-adenosyl-L-methionine is bound by residues Leu76, Gly108, and 127–132; that span reads FGRLTL.

This sequence belongs to the RNA methyltransferase RlmH family. As to quaternary structure, homodimer.

The protein resides in the cytoplasm. The enzyme catalyses pseudouridine(1915) in 23S rRNA + S-adenosyl-L-methionine = N(3)-methylpseudouridine(1915) in 23S rRNA + S-adenosyl-L-homocysteine + H(+). Its function is as follows. Specifically methylates the pseudouridine at position 1915 (m3Psi1915) in 23S rRNA. The polypeptide is Ribosomal RNA large subunit methyltransferase H (Streptococcus pneumoniae (strain 70585)).